Reading from the N-terminus, the 255-residue chain is DNA repair protein RecO (255 aa).

This sequence belongs to the RecO family.

Involved in DNA repair and RecF pathway recombination. In Listeria welshimeri serovar 6b (strain ATCC 35897 / DSM 20650 / CCUG 15529 / CIP 8149 / NCTC 11857 / SLCC 5334 / V8), this protein is DNA repair protein RecO.